A 268-amino-acid polypeptide reads, in one-letter code: GTP cyclohydrolase FolE2 (268 aa).

It belongs to the GTP cyclohydrolase IV family.

The enzyme catalyses GTP + H2O = 7,8-dihydroneopterin 3'-triphosphate + formate + H(+). Its pathway is cofactor biosynthesis; 7,8-dihydroneopterin triphosphate biosynthesis; 7,8-dihydroneopterin triphosphate from GTP: step 1/1. Converts GTP to 7,8-dihydroneopterin triphosphate. The sequence is that of GTP cyclohydrolase FolE2 from Methylococcus capsulatus (strain ATCC 33009 / NCIMB 11132 / Bath).